Consider the following 752-residue polypeptide: Double zinc ribbon and ankyrin repeat-containing protein 1 (752 aa).

A phosphoserine mark is found at Ser160 and Ser182. The tract at residues 164–187 (IPAYGGGSGSRPPTRQSQSPGFAH) is disordered. Positions 174–183 (RPPTRQSQSP) are enriched in polar residues. 2 consecutive DZANK-type zinc fingers follow at residues 211 to 270 (CAHC…CVVC) and 339 to 387 (CYRC…GSCG). 2 ANK repeats span residues 605–636 (ENRLLLKEVGPTGEGRVSVIEQLLDEGADPNC) and 640–669 (DNRPVITVAVMNKHHEAIPVLVQRGADIDQ).

As to quaternary structure, interacts with NINL isoform 2. Associates with DYNC1H1 and multiple dynein intermediate and light chains as well as actin-binding proteins.

The protein localises to the cytoplasm. It localises to the cytoskeleton. The protein resides in the microtubule organizing center. Its subcellular location is the centrosome. It is found in the cilium basal body. In terms of biological role, involved in vesicle transport in photoreceptor cells. The protein is Double zinc ribbon and ankyrin repeat-containing protein 1 of Homo sapiens (Human).